Consider the following 339-residue polypeptide: D-erythrose-4-phosphate dehydrogenase (339 aa).

12–13 (RI) is a binding site for NAD(+). Substrate-binding positions include 154-156 (SCT), Arg200, 213-214 (TK), and Arg236. The Nucleophile role is filled by Cys155. Position 318 (Asn318) interacts with NAD(+).

It belongs to the glyceraldehyde-3-phosphate dehydrogenase family. Epd subfamily. As to quaternary structure, homotetramer.

The protein resides in the cytoplasm. The catalysed reaction is D-erythrose 4-phosphate + NAD(+) + H2O = 4-phospho-D-erythronate + NADH + 2 H(+). It participates in cofactor biosynthesis; pyridoxine 5'-phosphate biosynthesis; pyridoxine 5'-phosphate from D-erythrose 4-phosphate: step 1/5. Catalyzes the NAD-dependent conversion of D-erythrose 4-phosphate to 4-phosphoerythronate. This Photorhabdus laumondii subsp. laumondii (strain DSM 15139 / CIP 105565 / TT01) (Photorhabdus luminescens subsp. laumondii) protein is D-erythrose-4-phosphate dehydrogenase.